Consider the following 287-residue polypeptide: Shikimate dehydrogenase (NADP(+)) (287 aa).

Shikimate is bound by residues 20 to 22 (SRS) and threonine 67. Lysine 71 (proton acceptor) is an active-site residue. NADP(+) is bound at residue glutamate 84. The shikimate site is built by asparagine 93 and aspartate 108. NADP(+) is bound by residues 132 to 136 (GAGGA), 156 to 161 (NRTAAR), and methionine 226. Tyrosine 228 contacts shikimate. NADP(+) is bound at residue glycine 250.

Belongs to the shikimate dehydrogenase family. As to quaternary structure, homodimer.

The catalysed reaction is shikimate + NADP(+) = 3-dehydroshikimate + NADPH + H(+). It functions in the pathway metabolic intermediate biosynthesis; chorismate biosynthesis; chorismate from D-erythrose 4-phosphate and phosphoenolpyruvate: step 4/7. Its function is as follows. Involved in the biosynthesis of the chorismate, which leads to the biosynthesis of aromatic amino acids. Catalyzes the reversible NADPH linked reduction of 3-dehydroshikimate (DHSA) to yield shikimate (SA). In Bordetella pertussis (strain Tohama I / ATCC BAA-589 / NCTC 13251), this protein is Shikimate dehydrogenase (NADP(+)).